Here is a 409-residue protein sequence, read N- to C-terminus: Putative competence-damage inducible protein (409 aa).

This sequence belongs to the CinA family.

In Clostridium botulinum (strain Loch Maree / Type A3), this protein is Putative competence-damage inducible protein.